The following is a 296-amino-acid chain: Cytidine deaminase (296 aa).

CMP/dCMP-type deaminase domains follow at residues 47-167 (TEAE…FGPK) and 186-296 (DSSD…VDPV). Residue 88–90 (NLE) participates in substrate binding. Histidine 101 contacts Zn(2+). Glutamate 103 serves as the catalytic Proton donor. Positions 128 and 131 each coordinate Zn(2+).

Belongs to the cytidine and deoxycytidylate deaminase family. In terms of assembly, homodimer. Zn(2+) is required as a cofactor.

It carries out the reaction cytidine + H2O + H(+) = uridine + NH4(+). The enzyme catalyses 2'-deoxycytidine + H2O + H(+) = 2'-deoxyuridine + NH4(+). In terms of biological role, this enzyme scavenges exogenous and endogenous cytidine and 2'-deoxycytidine for UMP synthesis. This chain is Cytidine deaminase, found in Shewanella sp. (strain MR-7).